Consider the following 170-residue polypeptide: CASP-like protein 2D1 (170 aa).

At Met-1–Leu-4 the chain is on the cytoplasmic side. The chain crosses the membrane as a helical span at residues Leu-5–Val-25. The Extracellular segment spans residues Thr-26–Tyr-47. The helical transmembrane segment at Met-48–Ile-68 threads the bilayer. Over Arg-69–Gln-83 the chain is Cytoplasmic. A helical membrane pass occupies residues Ile-84–Tyr-104. Topologically, residues Asn-105–Lys-127 are extracellular. The chain crosses the membrane as a helical span at residues Leu-128–Ala-148. The Cytoplasmic portion of the chain corresponds to Tyr-149 to Ala-170.

Belongs to the Casparian strip membrane proteins (CASP) family. As to quaternary structure, homodimer and heterodimers.

It is found in the cell membrane. The protein is CASP-like protein 2D1 of Populus trichocarpa (Western balsam poplar).